The sequence spans 109 residues: EPIDERMAL PATTERNING FACTOR-like protein 4 (109 aa).

A signal peptide spans 1 to 26 (MGTFRRRRRFLLAALVTFALLHLFSA). 3 disulfides stabilise this stretch: cysteine 66–cysteine 100, cysteine 70–cysteine 76, and cysteine 73–cysteine 102.

Belongs to the plant cysteine rich small secretory peptide family. Epidermal patterning factor subfamily. In terms of assembly, interacts with ERECTA. In terms of tissue distribution, expressed at the base of the apical meristem at 3 days after germination. Not detected in the hypocotyl. Expressed in developing stems soon after bolting, in inflorescence stems and in young siliques.

It localises to the secreted. Functionally, acts primarily as positive regulator of inflorescence growth. Endodermal expression is sufficient for proper inflorescence architecture. Redundantly involved with EPFL6 in procambial development regulation. Controls stomatal patterning. Mediates stomatal development inhibition. TMM (AC Q9SSD1) functions to dampen or block CLL2 signaling. Acts as a growth-regulatory ligand for ERECTA family receptors. The chain is EPIDERMAL PATTERNING FACTOR-like protein 4 from Arabidopsis thaliana (Mouse-ear cress).